Reading from the N-terminus, the 128-residue chain is Fluoride-specific ion channel FluC (128 aa).

The next 4 helical transmembrane spans lie at 5 to 25, 35 to 55, 67 to 87, and 96 to 116; these read IVAIFVGAGLGALLRWFLSLA, LGTLASNLIGGYVIGVAAVVF, LFVITGFLGGLTTFSTYSVEV, and FGWALAVAALHLTGSFALTAL. Residues glycine 75 and threonine 78 each contribute to the Na(+) site.

It belongs to the fluoride channel Fluc/FEX (TC 1.A.43) family.

The protein resides in the cell inner membrane. The catalysed reaction is fluoride(in) = fluoride(out). With respect to regulation, na(+) is not transported, but it plays an essential structural role and its presence is essential for fluoride channel function. Functionally, fluoride-specific ion channel. Important for reducing fluoride concentration in the cell, thus reducing its toxicity. This chain is Fluoride-specific ion channel FluC, found in Burkholderia orbicola (strain MC0-3).